The following is a 140-amino-acid chain: 3-hydroxyacyl-[acyl-carrier-protein] dehydratase FabZ (140 aa).

Residue His-47 is part of the active site.

Belongs to the thioester dehydratase family. FabZ subfamily.

It is found in the cytoplasm. The enzyme catalyses a (3R)-hydroxyacyl-[ACP] = a (2E)-enoyl-[ACP] + H2O. Involved in unsaturated fatty acids biosynthesis. Catalyzes the dehydration of short chain beta-hydroxyacyl-ACPs and long chain saturated and unsaturated beta-hydroxyacyl-ACPs. The polypeptide is 3-hydroxyacyl-[acyl-carrier-protein] dehydratase FabZ (Streptococcus gordonii (strain Challis / ATCC 35105 / BCRC 15272 / CH1 / DL1 / V288)).